Reading from the N-terminus, the 247-residue chain is Probable transcriptional regulatory protein YPK_2146 (247 aa).

It belongs to the TACO1 family.

The protein resides in the cytoplasm. This chain is Probable transcriptional regulatory protein YPK_2146, found in Yersinia pseudotuberculosis serotype O:3 (strain YPIII).